The sequence spans 236 residues: C-&gt;U-editing enzyme APOBEC-1 (236 aa).

The region spanning 10-134 (GDPTLRRRIE…QQNRQGLRDL (125 aa)) is the CMP/dCMP-type deaminase domain. His-61 is a Zn(2+) binding site. The Proton donor role is filled by Glu-63. Zn(2+)-binding residues include Cys-93 and Cys-96.

Belongs to the cytidine and deoxycytidylate deaminase family. As to quaternary structure, homodimer. Interacts with A1CF; form an mRNA editing complex. Interacts with RBM47; form an mRNA editing complex. Found in a complex with CELF2/CUGBP2 and A1CF. Interacts with HNRPAB. Interacts with SYNCRIP. Zn(2+) serves as cofactor. In terms of tissue distribution, expressed exclusively in the small intestine.

It is found in the cytoplasm. The protein localises to the nucleus. It catalyses the reaction a cytidine in mRNA + H2O + H(+) = a uridine in mRNA + NH4(+). The enzyme catalyses cytidine(6666) in apoB mRNA + H2O + H(+) = uridine(6666) in apoB mRNA + NH4(+). Functionally, cytidine deaminase catalyzing the cytidine to uridine postranscriptional editing of a variety of mRNAs. Form complexes with cofactors that confer differential editing activity and selectivity. Responsible for the postranscriptional editing of a CAA codon for Gln to a UAA codon for stop in the apolipoprotein B mRNA. Also involved in CGA (Arg) to UGA (Stop) editing in the NF1 mRNA. May also play a role in the epigenetic regulation of gene expression by participating in DNA demethylation. The sequence is that of C-&gt;U-editing enzyme APOBEC-1 from Homo sapiens (Human).